Here is a 281-residue protein sequence, read N- to C-terminus: Elongation factor Ts (281 aa).

An involved in Mg(2+) ion dislocation from EF-Tu region spans residues 80 to 83; that stretch reads TDFV.

This sequence belongs to the EF-Ts family.

It is found in the cytoplasm. In terms of biological role, associates with the EF-Tu.GDP complex and induces the exchange of GDP to GTP. It remains bound to the aminoacyl-tRNA.EF-Tu.GTP complex up to the GTP hydrolysis stage on the ribosome. The protein is Elongation factor Ts of Vibrio atlanticus (strain LGP32) (Vibrio splendidus (strain Mel32)).